We begin with the raw amino-acid sequence, 121 residues long: Small ribosomal subunit protein uS13 (121 aa).

The disordered stretch occupies residues 93–121; that stretch reads KGLPMRGQRTRTNARTRKGPRRAAQALKK.

It belongs to the universal ribosomal protein uS13 family. As to quaternary structure, part of the 30S ribosomal subunit. Forms a loose heterodimer with protein S19. Forms two bridges to the 50S subunit in the 70S ribosome.

In terms of biological role, located at the top of the head of the 30S subunit, it contacts several helices of the 16S rRNA. In the 70S ribosome it contacts the 23S rRNA (bridge B1a) and protein L5 of the 50S subunit (bridge B1b), connecting the 2 subunits; these bridges are implicated in subunit movement. Contacts the tRNAs in the A and P-sites. The polypeptide is Small ribosomal subunit protein uS13 (Burkholderia ambifaria (strain ATCC BAA-244 / DSM 16087 / CCUG 44356 / LMG 19182 / AMMD) (Burkholderia cepacia (strain AMMD))).